The following is a 185-amino-acid chain: Large ribosomal subunit protein uL5 (185 aa).

Belongs to the universal ribosomal protein uL5 family. As to quaternary structure, part of the 50S ribosomal subunit; part of the 5S rRNA/L5/L18/L25 subcomplex. Contacts the 5S rRNA and the P site tRNA. Forms a bridge to the 30S subunit in the 70S ribosome.

Functionally, this is one of the proteins that bind and probably mediate the attachment of the 5S RNA into the large ribosomal subunit, where it forms part of the central protuberance. In the 70S ribosome it contacts protein S13 of the 30S subunit (bridge B1b), connecting the 2 subunits; this bridge is implicated in subunit movement. Contacts the P site tRNA; the 5S rRNA and some of its associated proteins might help stabilize positioning of ribosome-bound tRNAs. This is Large ribosomal subunit protein uL5 from Bacteroides fragilis (strain ATCC 25285 / DSM 2151 / CCUG 4856 / JCM 11019 / LMG 10263 / NCTC 9343 / Onslow / VPI 2553 / EN-2).